The chain runs to 536 residues: UDP-glucuronosyltransferase 2A2 (536 aa).

Topologically, residues 1–15 (MVSIRDFTMPKKFVQ) are cytoplasmic. Residues 16–36 (MLVFNLTLTEVVLSGNVLIWP) traverse the membrane as a helical segment. The Lumenal segment spans residues 37 to 500 (TDGSHWLNIK…TWFQYHSLDV (464 aa)). Residues asparagine 58, asparagine 322, and asparagine 356 are each glycosylated (N-linked (GlcNAc...) asparagine). The chain crosses the membrane as a helical span at residues 501 to 521 (IGFLLVCVTTAIFLVIQCCLF). Residues 522-536 (SCQKFGKIGKKKKRE) lie on the Cytoplasmic side of the membrane.

The protein belongs to the UDP-glycosyltransferase family. As to expression, mainly expressed in the nasal mucosa.

The protein localises to the endoplasmic reticulum membrane. The enzyme catalyses glucuronate acceptor + UDP-alpha-D-glucuronate = acceptor beta-D-glucuronoside + UDP + H(+). It catalyses the reaction 17alpha-estradiol + UDP-alpha-D-glucuronate = 17alpha-estradiol 3-O-(beta-D-glucuronate) + UDP + H(+). The catalysed reaction is 17beta-estradiol + UDP-alpha-D-glucuronate = 17beta-estradiol 3-O-(beta-D-glucuronate) + UDP + H(+). It carries out the reaction chenodeoxycholate + UDP-alpha-D-glucuronate = chenodeoxycholoyl-24-O-(beta-D-glucuronate) + UDP. The enzyme catalyses lithocholate + UDP-alpha-D-glucuronate = lithocholoyl-24-O-(beta-D-glucuronate) + UDP. It catalyses the reaction deoxycholate + UDP-alpha-D-glucuronate = deoxycholoyl-24-O-(beta-D-glucuronate) + UDP. The catalysed reaction is hyocholate + UDP-alpha-D-glucuronate = hyocholoyl-24-O-(beta-D-glucuronate) + UDP. It carries out the reaction hyodeoxycholate + UDP-alpha-D-glucuronate = hyodeoxycholate 6-O-(beta-D-glucuronate) + UDP + H(+). Functionally, UDP-glucuronosyltransferase (UGT) that catalyzes phase II biotransformation reactions in which lipophilic substrates are conjugated with glucuronic acid to increase the metabolite's water solubility, thereby facilitating excretion into either the urine or bile. Essential for the elimination and detoxification of drugs, xenobiotics and endogenous compounds. Catalyzes the glucuronidation of endogenous estrogen hormone estradiol. Contributes to bile acid (BA) detoxification by catalyzing the glucuronidation of BA substrates, which are natural detergents for dietary lipids absorption. Shows a potential role in detoxification of toxic waste compounds in the amniotic fluid before birth, and air-born chemical after birth. In Homo sapiens (Human), this protein is UDP-glucuronosyltransferase 2A2.